Reading from the N-terminus, the 366-residue chain is Aminomethyltransferase (366 aa).

The protein belongs to the GcvT family. The glycine cleavage system is composed of four proteins: P, T, L and H.

The catalysed reaction is N(6)-[(R)-S(8)-aminomethyldihydrolipoyl]-L-lysyl-[protein] + (6S)-5,6,7,8-tetrahydrofolate = N(6)-[(R)-dihydrolipoyl]-L-lysyl-[protein] + (6R)-5,10-methylene-5,6,7,8-tetrahydrofolate + NH4(+). Functionally, the glycine cleavage system catalyzes the degradation of glycine. The chain is Aminomethyltransferase from Sodalis glossinidius (strain morsitans).